Here is a 355-residue protein sequence, read N- to C-terminus: 3-dehydroquinate synthase (355 aa).

Residues 71–76 (EGEERK), 105–109 (GVVGD), 129–130 (TS), K142, and K151 contribute to the NAD(+) site. E184, H246, and H263 together coordinate Zn(2+).

This sequence belongs to the sugar phosphate cyclases superfamily. Dehydroquinate synthase family. Co(2+) is required as a cofactor. Requires Zn(2+) as cofactor. NAD(+) serves as cofactor.

It localises to the cytoplasm. It catalyses the reaction 7-phospho-2-dehydro-3-deoxy-D-arabino-heptonate = 3-dehydroquinate + phosphate. Its pathway is metabolic intermediate biosynthesis; chorismate biosynthesis; chorismate from D-erythrose 4-phosphate and phosphoenolpyruvate: step 2/7. Catalyzes the conversion of 3-deoxy-D-arabino-heptulosonate 7-phosphate (DAHP) to dehydroquinate (DHQ). This is 3-dehydroquinate synthase from Streptococcus pneumoniae (strain Hungary19A-6).